The following is a 244-amino-acid chain: Tetraspanin-7 (244 aa).

Topologically, residues 1-11 (METKPVITCLK) are cytoplasmic. The helical transmembrane segment at 12–35 (TLLIIYSFVFWITGVILLAVGVWG) threads the bilayer. Residues 36–51 (KLTLGTYISLIAENST) lie on the Extracellular side of the membrane. N49 is a glycosylation site (N-linked (GlcNAc...) asparagine). A helical transmembrane segment spans residues 52–70 (NAPYVLIGTGTTIVVFGLF). Residues 71–81 (GCFATCRGSPW) lie on the Cytoplasmic side of the membrane. The helical transmembrane segment at 82 to 107 (MLKLYAMFLSLVFLAELVAGISGFVF) threads the bilayer. At 108–208 (RHEIKDTFLR…LVTSFMETNM (101 aa)) the chain is on the extracellular side. N150, N153, N172, and N183 each carry an N-linked (GlcNAc...) asparagine glycan. The chain crosses the membrane as a helical span at residues 209–229 (GIIAGVAFGIAFSQLIGMLLA). Residues 230 to 244 (CCLSRFITANQYEMV) lie on the Cytoplasmic side of the membrane.

Belongs to the tetraspanin (TM4SF) family.

It is found in the membrane. In terms of biological role, may be involved in cell proliferation and cell motility. This Pan troglodytes (Chimpanzee) protein is Tetraspanin-7 (TSPAN7).